Here is a 217-residue protein sequence, read N- to C-terminus: E3 ubiquitin-protein ligase znrf2 (217 aa).

Disordered regions lie at residues 1 to 27 and 63 to 111; these read MGAK…SATA and QFIS…ERST. A lipid anchor (N-myristoyl glycine) is attached at Gly-2. The segment covering 68 to 100 has biased composition (polar residues); it reads RTRSVGPSARPQSGINIPNSGAYSSADSGNSTP. An RING-type; atypical zinc finger spans residues 174 to 215; it reads CAICLEELLQGDTIARLPCLCIYHKGCIDEWFEVNRSCPEHP.

Its subcellular location is the endosome membrane. The protein localises to the lysosome membrane. It is found in the presynaptic cell membrane. The catalysed reaction is S-ubiquitinyl-[E2 ubiquitin-conjugating enzyme]-L-cysteine + [acceptor protein]-L-lysine = [E2 ubiquitin-conjugating enzyme]-L-cysteine + N(6)-ubiquitinyl-[acceptor protein]-L-lysine.. The protein operates within protein modification; protein ubiquitination. In terms of biological role, may play a role in the establishment and maintenance of neuronal transmission and plasticity via its ubiquitin ligase activity. E3 ubiquitin ligases accept ubiquitin from an E2 ubiquitin-conjugating enzyme in the form of a thioester and then directly transfer the ubiquitin to targeted substrates. The protein is E3 ubiquitin-protein ligase znrf2 (znrf2) of Danio rerio (Zebrafish).